The chain runs to 377 residues: Phospho-N-acetylmuramoyl-pentapeptide-transferase (377 aa).

A run of 11 helical transmembrane segments spans residues 9-29 (YITLRAVLACATALLIGLVAG), 62-82 (MGGALILIAIAISTLLWADWI), 85-105 (FVWVVLLVTFGFGWIGWMDDY), 122-142 (FFWQATIGLVAAVYLAFAVSA), 155-175 (WVGSGFTMPLPTRADLIVPFF), 178-198 (VSYPLGVLGFVALTWAVIVGT), 210-230 (GLAIMPTVMVGSALGIFAYVV), 247-267 (AAELMVLCAAIGGAGLAFLWF), 274-294 (VFMGDVGALALGGALGTIAVI), 299-319 (IVLFIMGGVFVVETLSVMVQV), and 354-374 (QVVVRFWIITMMLVLVGLSTL).

The protein belongs to the glycosyltransferase 4 family. MraY subfamily. Mg(2+) serves as cofactor.

The protein resides in the cell inner membrane. It carries out the reaction UDP-N-acetyl-alpha-D-muramoyl-L-alanyl-gamma-D-glutamyl-meso-2,6-diaminopimeloyl-D-alanyl-D-alanine + di-trans,octa-cis-undecaprenyl phosphate = di-trans,octa-cis-undecaprenyl diphospho-N-acetyl-alpha-D-muramoyl-L-alanyl-D-glutamyl-meso-2,6-diaminopimeloyl-D-alanyl-D-alanine + UMP. It functions in the pathway cell wall biogenesis; peptidoglycan biosynthesis. Its function is as follows. Catalyzes the initial step of the lipid cycle reactions in the biosynthesis of the cell wall peptidoglycan: transfers peptidoglycan precursor phospho-MurNAc-pentapeptide from UDP-MurNAc-pentapeptide onto the lipid carrier undecaprenyl phosphate, yielding undecaprenyl-pyrophosphoryl-MurNAc-pentapeptide, known as lipid I. The protein is Phospho-N-acetylmuramoyl-pentapeptide-transferase of Bordetella parapertussis (strain 12822 / ATCC BAA-587 / NCTC 13253).